The chain runs to 132 residues: MKIVKLQDIIGTEREVHGEGWRSRRILLKKDKMGFSLHETIWPPGHELRMWYKNHLEAVYCVAGNGSIEDLETGEVHELYDGVCYALDKHDRHILRGGTEEMRLVCVFNPPVTGLEVHDEDGAYCLVEDDDD.

This sequence belongs to the ectoine synthase family.

The catalysed reaction is (2S)-4-acetamido-2-aminobutanoate = L-ectoine + H2O. The protein operates within amine and polyamine biosynthesis; ectoine biosynthesis; L-ectoine from L-aspartate 4-semialdehyde: step 3/3. Functionally, catalyzes the circularization of gamma-N-acetyl-alpha,gamma-diaminobutyric acid (ADABA) to ectoine (1,4,5,6-tetrahydro-2-methyl-4-pyrimidine carboxylic acid), which is an excellent osmoprotectant. The chain is L-ectoine synthase from Alkalilimnicola ehrlichii (strain ATCC BAA-1101 / DSM 17681 / MLHE-1).